The sequence spans 345 residues: Achaete-scute complex protein T4 (345 aa).

Residues 78–92 (SESVSSLSPGSSPAP) show a composition bias toward low complexity. Residues 78–109 (SESVSSLSPGSSPAPYNVDQSQSVQRRNARER) form a disordered region. The 64-residue stretch at 99-162 (QSVQRRNARE…RIAVEYIRRL (64 aa)) folds into the bHLH domain.

In terms of assembly, efficient DNA binding requires dimerization with another bHLH protein. Interacts with da (via bHLH motif). Interacts with Bap60. In terms of tissue distribution, l(1)SC, SC and AC strongly label the presumptive stomatogastric nervous system, while ASE is more prominent in the presumptive procephalic lobe. Associates with the somatic nuclei through nuclear cycles 9 and 10. During nuclear cycle 11 distributes uniformly in the embryo.

In terms of biological role, AS-C proteins are involved in the determination of the neuronal precursors in the peripheral nervous system and the central nervous system. Also involved in sex determination and dosage compensation. In Drosophila melanogaster (Fruit fly), this protein is Achaete-scute complex protein T4 (sc).